The sequence spans 113 residues: UPF0416 protein RF_0879 (113 aa).

The protein belongs to the UPF0416 family.

The sequence is that of UPF0416 protein RF_0879 from Rickettsia felis (strain ATCC VR-1525 / URRWXCal2) (Rickettsia azadi).